The chain runs to 118 residues: Large ribosomal subunit protein bL19 (118 aa).

It belongs to the bacterial ribosomal protein bL19 family.

Functionally, this protein is located at the 30S-50S ribosomal subunit interface and may play a role in the structure and function of the aminoacyl-tRNA binding site. This chain is Large ribosomal subunit protein bL19, found in Geobacter sulfurreducens (strain ATCC 51573 / DSM 12127 / PCA).